The chain runs to 133 residues: Nickel-responsive regulator (133 aa).

H76, H87, H89, and C95 together coordinate Ni(2+).

This sequence belongs to the transcriptional regulatory CopG/NikR family. As to quaternary structure, homotetramer. The cofactor is Ni(2+).

Transcriptional repressor of the nikABCDE operon. Is active in the presence of excessive concentrations of intracellular nickel. The chain is Nickel-responsive regulator from Salmonella paratyphi A (strain ATCC 9150 / SARB42).